The primary structure comprises 227 residues: MAYPFQLGLQDATSPIMEELMNFHDHTLMIVFLISSLVLYIISLMLTTKLTHTSTMDAQEVETIWTILPAAILILIALPSLRILYMMDEINNPALTVKTMGHQWYWSYEYTDYEDLCFDSYMIPTNDLKPGELRLLEVDNRVVLPMELPIRMLISSEDVLHSWAVPSLGLKTDAIPGRLNQATVSSNRPGLFYGQCSEICGSNHSFMPIVLEMVPLKYFENWSASMI.

Over 1–14 (MAYPFQLGLQDATS) the chain is Mitochondrial intermembrane. The helical transmembrane segment at 15 to 45 (PIMEELMNFHDHTLMIVFLISSLVLYIISLM) threads the bilayer. Residues 46–59 (LTTKLTHTSTMDAQ) lie on the Mitochondrial matrix side of the membrane. The chain crosses the membrane as a helical span at residues 60-87 (EVETIWTILPAAILILIALPSLRILYMM). Over 88–227 (DEINNPALTV…YFENWSASMI (140 aa)) the chain is Mitochondrial intermembrane. His-161, Cys-196, Glu-198, Cys-200, His-204, and Met-207 together coordinate Cu cation. Residue Glu-198 participates in Mg(2+) binding. At Tyr-218 the chain carries Phosphotyrosine.

Belongs to the cytochrome c oxidase subunit 2 family. Component of the cytochrome c oxidase (complex IV, CIV), a multisubunit enzyme composed of 14 subunits. The complex is composed of a catalytic core of 3 subunits MT-CO1, MT-CO2 and MT-CO3, encoded in the mitochondrial DNA, and 11 supernumerary subunits COX4I, COX5A, COX5B, COX6A, COX6B, COX6C, COX7A, COX7B, COX7C, COX8 and NDUFA4, which are encoded in the nuclear genome. The complex exists as a monomer or a dimer and forms supercomplexes (SCs) in the inner mitochondrial membrane with NADH-ubiquinone oxidoreductase (complex I, CI) and ubiquinol-cytochrome c oxidoreductase (cytochrome b-c1 complex, complex III, CIII), resulting in different assemblies (supercomplex SCI(1)III(2)IV(1) and megacomplex MCI(2)III(2)IV(2)). Found in a complex with TMEM177, COA6, COX18, COX20, SCO1 and SCO2. Interacts with TMEM177 in a COX20-dependent manner. Interacts with COX20. Interacts with COX16. Cu cation serves as cofactor.

Its subcellular location is the mitochondrion inner membrane. The enzyme catalyses 4 Fe(II)-[cytochrome c] + O2 + 8 H(+)(in) = 4 Fe(III)-[cytochrome c] + 2 H2O + 4 H(+)(out). Component of the cytochrome c oxidase, the last enzyme in the mitochondrial electron transport chain which drives oxidative phosphorylation. The respiratory chain contains 3 multisubunit complexes succinate dehydrogenase (complex II, CII), ubiquinol-cytochrome c oxidoreductase (cytochrome b-c1 complex, complex III, CIII) and cytochrome c oxidase (complex IV, CIV), that cooperate to transfer electrons derived from NADH and succinate to molecular oxygen, creating an electrochemical gradient over the inner membrane that drives transmembrane transport and the ATP synthase. Cytochrome c oxidase is the component of the respiratory chain that catalyzes the reduction of oxygen to water. Electrons originating from reduced cytochrome c in the intermembrane space (IMS) are transferred via the dinuclear copper A center (CU(A)) of subunit 2 and heme A of subunit 1 to the active site in subunit 1, a binuclear center (BNC) formed by heme A3 and copper B (CU(B)). The BNC reduces molecular oxygen to 2 water molecules using 4 electrons from cytochrome c in the IMS and 4 protons from the mitochondrial matrix. This Lemniscomys barbarus (Barbary striped grass mouse) protein is Cytochrome c oxidase subunit 2 (MT-CO2).